Consider the following 469-residue polypeptide: Glutamine synthetase (469 aa).

In terms of domain architecture, GS beta-grasp spans 14 to 99 (NDVKFVDLRF…FCDILDPVSG (86 aa)). The 364-residue stretch at 106–469 (PRGTAKKAEA…PVEFDMYYSV (364 aa)) folds into the GS catalytic domain. Glu-131 and Glu-133 together coordinate Mg(2+). Glu-209 is a binding site for ATP. Mg(2+)-binding residues include Glu-214 and Glu-221. L-glutamate contacts are provided by residues 265–266 (NG) and Gly-266. His-270 is a Mg(2+) binding site. ATP contacts are provided by residues 272 to 274 (HLS) and Ser-274. L-glutamate is bound by residues Arg-322, Glu-328, and Arg-340. Arg-340, Arg-345, and Lys-353 together coordinate ATP. Glu-358 provides a ligand contact to Mg(2+). Arg-360 contacts L-glutamate. Residue Tyr-398 is modified to O-AMP-tyrosine.

The protein belongs to the glutamine synthetase family. As to quaternary structure, oligomer of 12 subunits arranged in the form of two hexameric ring. Requires Mg(2+) as cofactor.

The protein localises to the cytoplasm. It catalyses the reaction L-glutamate + NH4(+) + ATP = L-glutamine + ADP + phosphate + H(+). Its activity is regulated as follows. The activity of this enzyme could be controlled by adenylation under conditions of abundant glutamine. Functionally, catalyzes the ATP-dependent biosynthesis of glutamine from glutamate and ammonia. The sequence is that of Glutamine synthetase from Rhizobium meliloti (strain 1021) (Ensifer meliloti).